A 581-amino-acid polypeptide reads, in one-letter code: DNA primase (581 aa).

The CHC2-type zinc finger occupies C40–C64. The 83-residue stretch at N259 to P341 folds into the Toprim domain. Mg(2+) is bound by residues E265, D309, and D311.

The protein belongs to the DnaG primase family. In terms of assembly, monomer. Interacts with DnaB. The cofactor is Zn(2+). Requires Mg(2+) as cofactor.

The enzyme catalyses ssDNA + n NTP = ssDNA/pppN(pN)n-1 hybrid + (n-1) diphosphate.. In terms of biological role, RNA polymerase that catalyzes the synthesis of short RNA molecules used as primers for DNA polymerase during DNA replication. This is DNA primase from Escherichia coli O6:H1 (strain CFT073 / ATCC 700928 / UPEC).